The chain runs to 120 residues: UPF0231 protein KPN78578_01240 (120 aa).

This sequence belongs to the UPF0231 family.

This is UPF0231 protein KPN78578_01240 from Klebsiella pneumoniae subsp. pneumoniae (strain ATCC 700721 / MGH 78578).